Reading from the N-terminus, the 269-residue chain is Protein MrkE (269 aa).

A Response regulatory domain is found at 59-173 (KVIIVEDEFL…RIINMLQKLT (115 aa)). Position 110 is a 4-aspartylphosphate (Asp-110). An HTH LytTR-type domain is found at 197-269 (INLIKDERII…VAQVSIANRF (73 aa)).

Its function is as follows. May be involved in the regulation of fimbrial expression. The chain is Protein MrkE (mrkE) from Klebsiella pneumoniae.